A 315-amino-acid polypeptide reads, in one-letter code: Polyprenyl transferase mpaA (315 aa).

8 helical membrane passes run 40–60, 84–103, 118–135, 143–163, 174–194, 224–244, 248–268, and 279–299; these read IEFILYKAGLCFVHCLLLCGA, LASGKVTLTEALLWMTGQYF, IWSLMLPLTASIMLYPYL, VFVYPQYILGLAIGYPAITGW, GDIIKHCIPICLLVFFWCVYF, LFLAFLSVLPLLTIPYIISTI, WLWVSWMATWTVSIIMQIAQF, and IHWDNFLLGLWTIAACMVEVG.

The protein belongs to the UbiA prenyltransferase family. It depends on Mg(2+) as a cofactor.

It is found in the golgi apparatus membrane. The catalysed reaction is 5,7-dihydroxy-4-methylphthalide + (2E,6E)-farnesyl diphosphate = 4-farnesyl-3,5-dihydroxy-6-methylphthalide + diphosphate. It functions in the pathway secondary metabolite biosynthesis; terpenoid biosynthesis. In terms of biological role, polyprenyl transferase; part of the gene cluster that mediates the biosynthesis of mycophenolic acid (MPA), the first isolated antibiotic natural product in the world obtained from a culture of Penicillium brevicompactum in 1893. MpaA is a Golgi apparatus-associated enzyme that catalyzes the prenylation of 5,7-dihydroxy-4,6-dimethylphthalide (DHMP) to yield farnesyl-DHMP (FDHMP). The first step of the pathway is the synthesis of 5-methylorsellinic acid (5MOA) by the cytosolic polyketide synthase mpaC. 5MOA is then converted to the phthalide compound 5,7-dihydroxy-4,6-dimethylphthalide (DHMP) by the endoplasmic reticulum-bound cytochrome P450 monooxygenase mpaDE. MpaDE first catalyzes hydroxylation of 5-MOA to 4,6-dihydroxy-2-(hydroxymethyl)-3-methylbenzoic acid (DHMB). MpaDE then acts as a lactone synthase that catalyzes the ring closure to convert DHMB into DHMP. The next step is the prenylation of DHMP by the Golgi apparatus-associated prenyltransferase mpaA to yield farnesyl-DHMP (FDHMP). The ER-bound oxygenase mpaB then mediates the oxidative cleavage the C19-C20 double bond in FDHMP to yield FDHMP-3C via a mycophenolic aldehyde intermediate. The O-methyltransferase mpaG catalyzes the methylation of FDHMP-3C to yield MFDHMP-3C. After the cytosolic methylation of FDHMP-3C, MFDHMP-3C enters into peroxisomes probably via free diffusion due to its low molecular weight. Upon a peroxisomal CoA ligation reaction, catalyzed by a beta-oxidation component enzyme acyl-CoA ligase ACL891, MFDHMP-3C-CoA would then be restricted to peroxisomes for the following beta-oxidation pathway steps. The peroxisomal beta-oxidation machinery than converts MFDHMP-3C-CoA into MPA_CoA, via a beta-oxidation chain-shortening process. Finally mpaH acts as a peroxisomal acyl-CoA hydrolase with high substrate specificity toward MPA-CoA to release the final product MPA. In Penicillium brevicompactum, this protein is Polyprenyl transferase mpaA.